The primary structure comprises 136 residues: Nuclear receptor 2C2-associated protein (136 aa).

The protein belongs to the NR2C2AP family.

Its subcellular location is the nucleus. Functionally, may act as a repressor of nr2c2-mediated transactivation by suppressing the binding between nr2c2 and its response element in target genes. This is Nuclear receptor 2C2-associated protein (nr2c2ap) from Xenopus tropicalis (Western clawed frog).